Here is a 213-residue protein sequence, read N- to C-terminus: Large ribosomal subunit protein uL3 (213 aa).

Positions 124 to 151 are disordered; the sequence is KRHGQSRGPMAHGSRYHRRPGSMGSIAP.

Belongs to the universal ribosomal protein uL3 family. Part of the 50S ribosomal subunit. Forms a cluster with proteins L14 and L19.

Functionally, one of the primary rRNA binding proteins, it binds directly near the 3'-end of the 23S rRNA, where it nucleates assembly of the 50S subunit. The protein is Large ribosomal subunit protein uL3 of Geobacillus kaustophilus (strain HTA426).